The chain runs to 236 residues: Small ribosomal subunit protein bS21m (236 aa).

A disordered region spans residues 65 to 136; that stretch reads KPAAGAAAGG…SSKPSPMQTW (72 aa). Residues 107-131 show a composition bias toward low complexity; that stretch reads SNSSTSSSSSSSSSGGALYSSSKPS.

Belongs to the bacterial ribosomal protein bS21 family. Component of the mitochondrial small ribosomal subunit (mt-SSU). Mature N.crassa 74S mitochondrial ribosomes consist of a small (37S) and a large (54S) subunit. The 37S small subunit contains a 16S ribosomal RNA (16S mt-rRNA) and 32 different proteins. The 54S large subunit contains a 23S rRNA (23S mt-rRNA) and 42 different proteins.

The protein resides in the mitochondrion. Its function is as follows. Component of the mitochondrial ribosome (mitoribosome), a dedicated translation machinery responsible for the synthesis of mitochondrial genome-encoded proteins, including at least some of the essential transmembrane subunits of the mitochondrial respiratory chain. The mitoribosomes are attached to the mitochondrial inner membrane and translation products are cotranslationally integrated into the membrane. In Neurospora crassa (strain ATCC 24698 / 74-OR23-1A / CBS 708.71 / DSM 1257 / FGSC 987), this protein is Small ribosomal subunit protein bS21m (mrp21).